Reading from the N-terminus, the 340-residue chain is UDP-N-acetylglucosamine--N-acetylmuramyl-(pentapeptide) pyrophosphoryl-undecaprenol N-acetylglucosamine transferase (340 aa).

Residues 15–17 (TGG), Asn127, Ser184, Ile230, and Gln275 contribute to the UDP-N-acetyl-alpha-D-glucosamine site.

This sequence belongs to the glycosyltransferase 28 family. MurG subfamily.

Its subcellular location is the cell inner membrane. It carries out the reaction di-trans,octa-cis-undecaprenyl diphospho-N-acetyl-alpha-D-muramoyl-L-alanyl-D-glutamyl-meso-2,6-diaminopimeloyl-D-alanyl-D-alanine + UDP-N-acetyl-alpha-D-glucosamine = di-trans,octa-cis-undecaprenyl diphospho-[N-acetyl-alpha-D-glucosaminyl-(1-&gt;4)]-N-acetyl-alpha-D-muramoyl-L-alanyl-D-glutamyl-meso-2,6-diaminopimeloyl-D-alanyl-D-alanine + UDP + H(+). The protein operates within cell wall biogenesis; peptidoglycan biosynthesis. Functionally, cell wall formation. Catalyzes the transfer of a GlcNAc subunit on undecaprenyl-pyrophosphoryl-MurNAc-pentapeptide (lipid intermediate I) to form undecaprenyl-pyrophosphoryl-MurNAc-(pentapeptide)GlcNAc (lipid intermediate II). The protein is UDP-N-acetylglucosamine--N-acetylmuramyl-(pentapeptide) pyrophosphoryl-undecaprenol N-acetylglucosamine transferase of Vesicomyosocius okutanii subsp. Calyptogena okutanii (strain HA).